We begin with the raw amino-acid sequence, 245 residues long: Large ribosomal subunit protein uL3 (245 aa).

Gln-152 is subject to N5-methylglutamine. Positions 224-245 (RSKAVQAEAAAPAEAAAPEGDN) are disordered. Residues 230–245 (AEAAAPAEAAAPEGDN) are compositionally biased toward low complexity.

It belongs to the universal ribosomal protein uL3 family. As to quaternary structure, part of the 50S ribosomal subunit. Forms a cluster with proteins L14 and L19. In terms of processing, methylated by PrmB.

Its function is as follows. One of the primary rRNA binding proteins, it binds directly near the 3'-end of the 23S rRNA, where it nucleates assembly of the 50S subunit. The protein is Large ribosomal subunit protein uL3 of Paracoccus denitrificans (strain Pd 1222).